Here is a 310-residue protein sequence, read N- to C-terminus: Pirin-like protein At1g50590 (310 aa).

The protein belongs to the pirin family.

The protein resides in the nucleus. The polypeptide is Pirin-like protein At1g50590 (Arabidopsis thaliana (Mouse-ear cress)).